Reading from the N-terminus, the 594-residue chain is Alanine--tRNA ligase (594 aa).

The Zn(2+) site is built by H456, H460, C558, and H562.

It belongs to the class-II aminoacyl-tRNA synthetase family. It depends on Zn(2+) as a cofactor.

The protein localises to the cytoplasm. The enzyme catalyses tRNA(Ala) + L-alanine + ATP = L-alanyl-tRNA(Ala) + AMP + diphosphate. Functionally, catalyzes the attachment of alanine to tRNA(Ala) in a two-step reaction: alanine is first activated by ATP to form Ala-AMP and then transferred to the acceptor end of tRNA(Ala). Also edits incorrectly charged Ser-tRNA(Ala) and Gly-tRNA(Ala) via its editing domain. The sequence is that of Alanine--tRNA ligase (alaS) from Borreliella burgdorferi (strain ATCC 35210 / DSM 4680 / CIP 102532 / B31) (Borrelia burgdorferi).